The primary structure comprises 386 residues: Cytochrome b (386 aa).

The next 4 membrane-spanning stretches (helical) occupy residues 32 to 52, 76 to 98, 113 to 133, and 179 to 199; these read LGSL…FLAM, YLIR…AHIG, VWVI…LGYC, and FFAL…MHLM. Positions 82 and 96 each coordinate heme b. 2 residues coordinate heme b: H183 and H197. Residue H202 coordinates a ubiquinone. 4 helical membrane passes run 225-245, 289-309, 321-341, and 348-368; these read FVFK…LFVF, LGGV…PVTD, ISKT…QLGQ, and FIQL…FIVP.

Belongs to the cytochrome b family. In terms of assembly, fungal cytochrome b-c1 complex contains 10 subunits; 3 respiratory subunits, 2 core proteins and 5 low-molecular weight proteins. Cytochrome b-c1 complex is a homodimer. It depends on heme b as a cofactor.

The protein resides in the mitochondrion inner membrane. Component of the ubiquinol-cytochrome c reductase complex (complex III or cytochrome b-c1 complex) that is part of the mitochondrial respiratory chain. The b-c1 complex mediates electron transfer from ubiquinol to cytochrome c. Contributes to the generation of a proton gradient across the mitochondrial membrane that is then used for ATP synthesis. This chain is Cytochrome b (COB), found in Wickerhamomyces canadensis (Yeast).